We begin with the raw amino-acid sequence, 520 residues long: Cytochrome P450 monooxygenase TRI4 (520 aa).

The helical transmembrane segment at 10 to 30 (LVNIPISHAVGVVAASTVIYF) threads the bilayer. A glycan (N-linked (GlcNAc...) asparagine) is linked at asparagine 447. Cysteine 455 is a binding site for heme.

It belongs to the cytochrome P450 family. The cofactor is heme.

The protein localises to the membrane. Its pathway is sesquiterpene biosynthesis; trichothecene biosynthesis. Functionally, cytochrome P450 monooxygenase; part of the core gene cluster that mediates the biosynthesis of trichothecenes, a very large family of chemically related bicyclic sesquiterpene compounds acting as mycotoxins, including T2-toxin. The biosynthesis of trichothecenes begins with the cyclization of farnesyl diphosphate to trichodiene and is catalyzed by the trichodiene synthase TRI5. Trichodiene undergoes a series of oxygenations catalyzed by the cytochrome P450 monooxygenase TRI4. TRI4 controls the addition of four oxygens at C-2, C-3, C-11, and the C-12, C-13-epoxide to form the intermediate isotrichotriol. Isotrichotriol then undergoes a non-enzymatic isomerization and cyclization to form isotrichodermol. During this process, the oxygen at the C-2 position becomes the pyran ring oxygen and the hydroxyl group at C-11 is lost. More complex type A trichothecenes are built by modifying isotrichodermol through a series of paired hydroxylation and acetylation or acylation steps. Isotrichodermol is converted to isotrichodermin by the acetyltransferase TRI101. TRI101 encodes a C-3 transacetylase that acts as a self-protection or resistance factor during biosynthesis and that the presence of a free C-3 hydroxyl group is a key component of Fusarium trichothecene phytotoxicity. A second hydroxyl group is added to C-15 by the trichothecene C-15 hydroxylase TRI11, producing 15-decalonectrin, which is then acetylated by TRI3, producing calonectrin. A third hydroxyl group is added at C-4 by the cytochrome P450 monooxygenase TRI13, converting calonectrin to 3,15-diacetoxyspirpenol, which is subsequently acetylated by the acetyltransferase TRI7. A fourth hydroxyl group is added to C-8 by the cytochrome P450 monooxygenase TRI1, followed by the addition of an isovaleryl moiety by TRI16. Finally, the acetyl group is removed from the C-3 position by the trichothecene C-3 esterase TRI8 to produce T-2 toxin. The chain is Cytochrome P450 monooxygenase TRI4 from Fusarium sporotrichioides.